A 240-amino-acid polypeptide reads, in one-letter code: Biosynthetic peptidoglycan transglycosylase (240 aa).

Residues 15-35 (WMVYLGAVVAIAWLATQAFYF) traverse the membrane as a helical segment.

This sequence belongs to the glycosyltransferase 51 family.

Its subcellular location is the cell inner membrane. It carries out the reaction [GlcNAc-(1-&gt;4)-Mur2Ac(oyl-L-Ala-gamma-D-Glu-L-Lys-D-Ala-D-Ala)](n)-di-trans,octa-cis-undecaprenyl diphosphate + beta-D-GlcNAc-(1-&gt;4)-Mur2Ac(oyl-L-Ala-gamma-D-Glu-L-Lys-D-Ala-D-Ala)-di-trans,octa-cis-undecaprenyl diphosphate = [GlcNAc-(1-&gt;4)-Mur2Ac(oyl-L-Ala-gamma-D-Glu-L-Lys-D-Ala-D-Ala)](n+1)-di-trans,octa-cis-undecaprenyl diphosphate + di-trans,octa-cis-undecaprenyl diphosphate + H(+). It participates in cell wall biogenesis; peptidoglycan biosynthesis. Its function is as follows. Peptidoglycan polymerase that catalyzes glycan chain elongation from lipid-linked precursors. This chain is Biosynthetic peptidoglycan transglycosylase, found in Paraburkholderia phytofirmans (strain DSM 17436 / LMG 22146 / PsJN) (Burkholderia phytofirmans).